We begin with the raw amino-acid sequence, 269 residues long: UPF0761 membrane protein HI_0276 (269 aa).

6 helical membrane passes run 32-52 (MLAM…FPVF), 89-109 (MSAV…NNID), 128-148 (FAIY…SIGI), 168-188 (LLSF…YTVV), 203-223 (FLAA…IVTF), and 232-252 (AMAT…VVLV).

Belongs to the UPF0761 family.

It localises to the cell inner membrane. The chain is UPF0761 membrane protein HI_0276 from Haemophilus influenzae (strain ATCC 51907 / DSM 11121 / KW20 / Rd).